Reading from the N-terminus, the 359-residue chain is Large ribosomal subunit protein bL27m (359 aa).

Residues 1–24 (MSFWKVATLWQMPLRPSILVQVRT) constitute a mitochondrion transit peptide. The tract at residues 29-48 (AAGSRTSMKDSAGRRLGPKK) is disordered. A compositionally biased stretch (basic and acidic residues) spans 35 to 48 (SMKDSAGRRLGPKK).

Belongs to the bacterial ribosomal protein bL27 family.

The protein resides in the mitochondrion. In terms of biological role, component of the large subunit of mitochondrial ribosome. The sequence is that of Large ribosomal subunit protein bL27m (MRPL2) from Eremothecium gossypii (strain ATCC 10895 / CBS 109.51 / FGSC 9923 / NRRL Y-1056) (Yeast).